The chain runs to 388 residues: MAYSARLRKAVGAVRATLSAVELCDVQAPEFAQHGDHAVAADAPLVLVACSGGRDSMALAAVSHIVCTSMGVRCGAVIVDHGLQEGSEQVAGEAANRCRALGLGPVIVRNATVQARGEGLEAAARQARYNELCAAARESGAIAVLLAHTMDDQAETVLIGLLRSRGVDALAGMPQVFTRSGVTFARPLLTLTRAETTGICEDLGVEYWDDPTNGDAVDGELPNDYPLRSRVRHDLLPAIERFAGFNVARHFAESARLARMDKEYLDQRSDEVMGEAVTTVDWPASSAAVSTDTPRACAAGDTNDSSHGVGLMISVRRIAREPEAIRLRVIAHALSQAGVNASAAQIAAIDRLVVDWHGQGGVSLPRGYSANRKKHVIRVCQDGAHANR.

An ATP-binding site is contributed by 51-56 (SGGRDS).

This sequence belongs to the tRNA(Ile)-lysidine synthase family.

The protein resides in the cytoplasm. The enzyme catalyses cytidine(34) in tRNA(Ile2) + L-lysine + ATP = lysidine(34) in tRNA(Ile2) + AMP + diphosphate + H(+). Ligates lysine onto the cytidine present at position 34 of the AUA codon-specific tRNA(Ile) that contains the anticodon CAU, in an ATP-dependent manner. Cytidine is converted to lysidine, thus changing the amino acid specificity of the tRNA from methionine to isoleucine. The protein is tRNA(Ile)-lysidine synthase of Bifidobacterium longum subsp. infantis (strain ATCC 15697 / DSM 20088 / JCM 1222 / NCTC 11817 / S12).